The chain runs to 259 residues: Pyrroloquinoline-quinone synthase (259 aa).

The protein belongs to the PqqC family.

The catalysed reaction is 6-(2-amino-2-carboxyethyl)-7,8-dioxo-1,2,3,4,7,8-hexahydroquinoline-2,4-dicarboxylate + 3 O2 = pyrroloquinoline quinone + 2 H2O2 + 2 H2O + H(+). Its pathway is cofactor biosynthesis; pyrroloquinoline quinone biosynthesis. Ring cyclization and eight-electron oxidation of 3a-(2-amino-2-carboxyethyl)-4,5-dioxo-4,5,6,7,8,9-hexahydroquinoline-7,9-dicarboxylic-acid to PQQ. The polypeptide is Pyrroloquinoline-quinone synthase (Bradyrhizobium sp. (strain ORS 278)).